Consider the following 263-residue polypeptide: Small ribosomal subunit protein eS1 (263 aa).

The span at 235–254 (HGEGGGGKREAGDKSERPEG) shows a compositional bias: basic and acidic residues. The tract at residues 235–263 (HGEGGGGKREAGDKSERPEGYEPPVQESV) is disordered.

Belongs to the eukaryotic ribosomal protein eS1 family. Component of the small ribosomal subunit. Mature ribosomes consist of a small (40S) and a large (60S) subunit. The 40S subunit contains about 33 different proteins and 1 molecule of RNA (18S). The 60S subunit contains about 49 different proteins and 3 molecules of RNA (28S, 5.8S and 5S).

Its subcellular location is the cytoplasm. In Bombyx mandarina (Wild silk moth), this protein is Small ribosomal subunit protein eS1.